A 303-amino-acid polypeptide reads, in one-letter code: Growth/differentiation factor 15 (303 aa).

An N-terminal signal peptide occupies residues 1 to 30 (MALRALHAQPTGGPQLRFLLFLLLLLLLLS). A propeptide spanning residues 31–188 (WPSQGDALAL…LRSAAGRGRR (158 aa)) is cleaved from the precursor. A glycan (N-linked (GlcNAc...) asparagine) is linked at asparagine 71. Cystine bridges form between cysteine 198–cysteine 205, cysteine 206–cysteine 269, cysteine 235–cysteine 300, and cysteine 239–cysteine 302.

The protein belongs to the TGF-beta family. In terms of assembly, homodimer; disulfide-linked. Interacts with GFRAL and RET; ligand of GFRAL, which mediates GDF15 internalization and cellular signaling through interaction with RET via the formation of a 2:2:2 ternary complex composed of GDF15, GFRAL and RET. Detected in plasma (at protein level).

The protein localises to the secreted. Its function is as follows. Hormone produced in response to various stresses to confer information about those stresses to the brain, and trigger an aversive response, characterized by nausea and/or loss of appetite. The aversive response is both required to reduce continuing exposure to those stresses at the time of exposure and to promote avoidance behavior in the future. Acts by binding to its receptor, GFRAL, activating GFRAL-expressing neurons localized in the area postrema and nucleus tractus solitarius of the brainstem. It then triggers the activation of neurons localized within the parabrachial nucleus and central amygdala, which constitutes part of the 'emergency circuit' that shapes responses to stressful conditions. The GDF15-GFRAL signal induces expression of genes involved in metabolism, such as lipid metabolism in adipose tissues. Contributes to the effect of metformin, an anti-diabetic drug, on appetite reduction and weight loss: produced in the kidney in response to metformin treatment, thereby activating the GDF15-GFRAL response, leading to reduced appetite and weight. Required for avoidance behavior in response to food allergens: induced downstream of mast cell activation to promote aversion and minimize harmful effects of exposure to noxious substances. Produced in response to anticancer drugs, such as camptothecin or cisplatin, promoting nausea and contributing to malnutrition. Overproduced in many cancers, promoting anorexia in cancer (cachexia). Responsible for the risk of nausea during pregnancy: high levels of GDF15 during pregnancy, mostly originating from embryos, are associated with increased nausea. Maternal sensitivity to nausea is probably determined by pre-pregnancy exposure to GDF15, females with naturally high level of GDF15 being less susceptible to nausea than female rats with low levels of GDF15 before pregnancy. Promotes metabolic adaptation in response to systemic inflammation caused by bacterial and viral infections in order to promote tissue tolerance and prevent tissue damage. Required for tissue tolerance in response to myocardial infarction by acting as an inhibitor of leukocyte integring activation, thereby protecting against cardiac rupture. Inhibits growth hormone signaling on hepatocytes. The chain is Growth/differentiation factor 15 from Rattus norvegicus (Rat).